We begin with the raw amino-acid sequence, 460 residues long: Ribulose bisphosphate carboxylase (460 aa).

Asn112 is a binding site for substrate. Lys167 acts as the Proton acceptor in catalysis. Lys169 contributes to the substrate binding site. Residues Lys192, Asp194, and Glu195 each coordinate Mg(2+). Lys192 carries the post-translational modification N6-carboxylysine. His288 serves as the catalytic Proton acceptor. Arg289, His322, and Ser369 together coordinate substrate.

It belongs to the RuBisCO large chain family. Type II subfamily. Homodimer. Mg(2+) is required as a cofactor.

It carries out the reaction 2 (2R)-3-phosphoglycerate + 2 H(+) = D-ribulose 1,5-bisphosphate + CO2 + H2O. The enzyme catalyses D-ribulose 1,5-bisphosphate + O2 = 2-phosphoglycolate + (2R)-3-phosphoglycerate + 2 H(+). In terms of biological role, ruBisCO catalyzes two reactions: the carboxylation of D-ribulose 1,5-bisphosphate, the primary event in carbon dioxide fixation, as well as the oxidative fragmentation of the pentose substrate. Both reactions occur simultaneously and in competition at the same active site. The polypeptide is Ribulose bisphosphate carboxylase (Rhodopseudomonas palustris (strain BisA53)).